The following is a 243-amino-acid chain: Small ribosomal subunit protein uS2c (243 aa).

Residues 224-243 (GNNGKVSSDQEDTQELQTVQ) are disordered.

It belongs to the universal ribosomal protein uS2 family.

It is found in the plastid. Its subcellular location is the chloroplast. The protein is Small ribosomal subunit protein uS2c (rps2) of Rhodomonas salina (Cryptomonas salina).